The following is a 196-amino-acid chain: Small ribosomal subunit protein uS4c (196 aa).

The tract at residues 15 to 43 (LGALPGLTRKTPKSGSNQKKKFHSGKKEQ) is disordered. The 62-residue stretch at 89-150 (MRLDNILFRL…NQRSKRLVQN (62 aa)) folds into the S4 RNA-binding domain.

The protein belongs to the universal ribosomal protein uS4 family. Part of the 30S ribosomal subunit. Contacts protein S5. The interaction surface between S4 and S5 is involved in control of translational fidelity.

It is found in the plastid. It localises to the chloroplast. Its function is as follows. One of the primary rRNA binding proteins, it binds directly to 16S rRNA where it nucleates assembly of the body of the 30S subunit. Functionally, with S5 and S12 plays an important role in translational accuracy. The polypeptide is Small ribosomal subunit protein uS4c (rps4) (Bothriochloa ischaemum (Yellow bluestem)).